The following is a 500-amino-acid chain: 4-alpha-glucanotransferase (500 aa).

Belongs to the disproportionating enzyme family.

It is found in the cytoplasm. It carries out the reaction Transfers a segment of a (1-&gt;4)-alpha-D-glucan to a new position in an acceptor, which may be glucose or a (1-&gt;4)-alpha-D-glucan.. The chain is 4-alpha-glucanotransferase (malQ) from Thermus thermophilus.